The chain runs to 258 residues: Homeobox protein VENTX (258 aa).

Residues 1–32 are compositionally biased toward polar residues; that stretch reads MRLSSSPPRGPQQLSSFGSVDWLSQSSCSGPT. 2 disordered regions span residues 1 to 93 and 227 to 248; these read MRLS…RAPR and SHPP…PRGL. The segment at residues 91–150 is a DNA-binding region (homeobox); the sequence is APRVRTAFTMEQVRTLEGVFQHHQYLSPLERKRLAREMQLSEVQIKTWFQNRRMKHKRQM.

As to expression, expressed in bone marrow of patients recovering from chemotherapy. Also expressed in an erythroleukemia cell line.

It is found in the nucleus. Its function is as follows. May be involved in ventralization. The chain is Homeobox protein VENTX (VENTX) from Homo sapiens (Human).